The following is a 449-amino-acid chain: Probable phosphoglucosamine mutase (449 aa).

Ser96 (phosphoserine intermediate) is an active-site residue. The Mg(2+) site is built by Ser96, Asp233, Asp235, and Asp237. Ser96 is subject to Phosphoserine.

It belongs to the phosphohexose mutase family. Mg(2+) serves as cofactor. Post-translationally, activated by phosphorylation.

The catalysed reaction is alpha-D-glucosamine 1-phosphate = D-glucosamine 6-phosphate. Functionally, catalyzes the conversion of glucosamine-6-phosphate to glucosamine-1-phosphate. Does not display phosphoglucomutase (PGM) or phosphomannomutase (PMM) activities. The chain is Probable phosphoglucosamine mutase (glmM) from Thermococcus kodakarensis (strain ATCC BAA-918 / JCM 12380 / KOD1) (Pyrococcus kodakaraensis (strain KOD1)).